We begin with the raw amino-acid sequence, 736 residues long: Phosphoribosylformylglycinamidine synthase subunit PurL (736 aa).

His48 is an active-site residue. 2 residues coordinate ATP: Tyr51 and Lys90. Glu92 is a Mg(2+) binding site. Residues Ser93 to His96 and Arg115 contribute to the substrate site. His94 acts as the Proton acceptor in catalysis. Mg(2+) is bound at residue Asp116. Residue Gln239 coordinates substrate. Residue Asp267 coordinates Mg(2+). Glu311 to Gln313 is a substrate binding site. ATP is bound by residues Asp492 and Gly529. Asn530 serves as a coordination point for Mg(2+). Residue Ser532 participates in substrate binding.

The protein belongs to the FGAMS family. In terms of assembly, monomer. Part of the FGAM synthase complex composed of 1 PurL, 1 PurQ and 2 PurS subunits.

The protein localises to the cytoplasm. The enzyme catalyses N(2)-formyl-N(1)-(5-phospho-beta-D-ribosyl)glycinamide + L-glutamine + ATP + H2O = 2-formamido-N(1)-(5-O-phospho-beta-D-ribosyl)acetamidine + L-glutamate + ADP + phosphate + H(+). The protein operates within purine metabolism; IMP biosynthesis via de novo pathway; 5-amino-1-(5-phospho-D-ribosyl)imidazole from N(2)-formyl-N(1)-(5-phospho-D-ribosyl)glycinamide: step 1/2. Part of the phosphoribosylformylglycinamidine synthase complex involved in the purines biosynthetic pathway. Catalyzes the ATP-dependent conversion of formylglycinamide ribonucleotide (FGAR) and glutamine to yield formylglycinamidine ribonucleotide (FGAM) and glutamate. The FGAM synthase complex is composed of three subunits. PurQ produces an ammonia molecule by converting glutamine to glutamate. PurL transfers the ammonia molecule to FGAR to form FGAM in an ATP-dependent manner. PurS interacts with PurQ and PurL and is thought to assist in the transfer of the ammonia molecule from PurQ to PurL. This Bradyrhizobium sp. (strain ORS 278) protein is Phosphoribosylformylglycinamidine synthase subunit PurL.